Reading from the N-terminus, the 377-residue chain is Ribosomal RNA large subunit methyltransferase G (377 aa).

This sequence belongs to the methyltransferase superfamily. RlmG family.

The protein resides in the cytoplasm. It catalyses the reaction guanosine(1835) in 23S rRNA + S-adenosyl-L-methionine = N(2)-methylguanosine(1835) in 23S rRNA + S-adenosyl-L-homocysteine + H(+). In terms of biological role, specifically methylates the guanine in position 1835 (m2G1835) of 23S rRNA. This is Ribosomal RNA large subunit methyltransferase G from Shewanella sp. (strain ANA-3).